Reading from the N-terminus, the 171-residue chain is Putative ankyrin repeat protein PA3287 (171 aa).

3 ANK repeats span residues 48–77, 81–110, and 114–143; these read KGDSLLMLASYHGHADTVRLLLAYKADPDL, AGQTPLAGAAFKGDLAMVELLLAGGADVEG, and DGKTALMMAAMFNQAEVAASLLAHGARRDA.

The polypeptide is Putative ankyrin repeat protein PA3287 (Pseudomonas aeruginosa (strain ATCC 15692 / DSM 22644 / CIP 104116 / JCM 14847 / LMG 12228 / 1C / PRS 101 / PAO1)).